Consider the following 230-residue polypeptide: Large ribosomal subunit protein uL1 (230 aa).

It belongs to the universal ribosomal protein uL1 family. As to quaternary structure, part of the 50S ribosomal subunit.

Its function is as follows. Binds directly to 23S rRNA. The L1 stalk is quite mobile in the ribosome, and is involved in E site tRNA release. Functionally, protein L1 is also a translational repressor protein, it controls the translation of the L11 operon by binding to its mRNA. The sequence is that of Large ribosomal subunit protein uL1 from Afipia carboxidovorans (strain ATCC 49405 / DSM 1227 / KCTC 32145 / OM5) (Oligotropha carboxidovorans).